The primary structure comprises 333 residues: Ornithine carbamoyltransferase (333 aa).

Carbamoyl phosphate contacts are provided by residues 57-60, Arg-108, and 135-138; these read STRT and HPTQ. L-ornithine is bound by residues Asn-168, Asp-232, and 236–237; that span reads SM. Residues 274-275 and Arg-319 contribute to the carbamoyl phosphate site; that span reads CL.

The protein belongs to the aspartate/ornithine carbamoyltransferase superfamily. OTCase family.

It localises to the cytoplasm. The catalysed reaction is carbamoyl phosphate + L-ornithine = L-citrulline + phosphate + H(+). The protein operates within amino-acid degradation; L-arginine degradation via ADI pathway; carbamoyl phosphate from L-arginine: step 2/2. Functionally, reversibly catalyzes the transfer of the carbamoyl group from carbamoyl phosphate (CP) to the N(epsilon) atom of ornithine (ORN) to produce L-citrulline. The protein is Ornithine carbamoyltransferase of Pediococcus pentosaceus (strain ATCC 25745 / CCUG 21536 / LMG 10740 / 183-1w).